Here is a 508-residue protein sequence, read N- to C-terminus: 2'-5'-oligoadenylate synthase-like protein 2 (508 aa).

Ser-69 provides a ligand contact to ATP. Residues Asp-81, Asp-83, and Asp-154 each coordinate Mg(2+). ATP contacts are provided by Arg-213 and Lys-216. Positions 435–473 constitute a Ubiquitin-like domain; sequence ILVFVKYPGGQSKPFTIDPDDTILDLKEKIEDAGGPCAE.

Belongs to the 2-5A synthase family. Requires Mg(2+) as cofactor. Strongly expressed in spleen dendritic cells, whereas, in bone marrow-derived dendritic cells, the amount increases during the maturation process. Expressed in many organs, the highest levels being in thymus, lung, and bone marrow.

The enzyme catalyses 3 ATP = 5'-triphosphoadenylyl-(2'-&gt;5')-adenylyl-(2'-&gt;5')-adenosine + 2 diphosphate. With respect to regulation, produced as a latent enzyme which is activated by dsRNA generated during the course of viral infection. The dsRNA activator must be at least 15 nucleotides long, and no modification of the 2'-hydroxyl group is tolerated. ssRNA or dsDNA do not act as activators. Functionally, interferon-induced, dsRNA-activated antiviral enzyme which plays a critical role in cellular innate antiviral response. Synthesizes oligomers of 2'-5'-oligoadenylates (2-5A) from ATP which then bind to the inactive monomeric form of ribonuclease L (RNase L) leading to its dimerization and subsequent activation. Activation of RNase L leads to degradation of cellular as well as viral RNA, resulting in the inhibition of protein synthesis, thus terminating viral replication. Can mediate the antiviral effect via the classical RNase L-dependent pathway or an alternative antiviral pathway independent of RNase L. The protein is 2'-5'-oligoadenylate synthase-like protein 2 (Oasl2) of Mus musculus (Mouse).